Here is a 485-residue protein sequence, read N- to C-terminus: Silicon efflux transporter LSI3 (485 aa).

Transmembrane regions (helical) follow at residues 14-34 (VAFG…LPIG), 37-57 (AGAL…ADDA), 59-79 (ASID…GGYL), 106-126 (VCVV…CVVL), and 180-200 (FLLG…LMLL). The segment covering 233–242 (ALNNNKKDDG) has biased composition (basic and acidic residues). The disordered stretch occupies residues 233 to 261 (ALNNNKKDDGDAATPASPEDDDGGDAESM). Helical transmembrane passes span 283–303 (LFLK…YMLG), 336–356 (LLVF…TGLP), 377–397 (VLSV…TVLL), 418–438 (WLLL…GSAA), and 461–481 (HVIF…PLIG).

It belongs to the arsenite-antimonite (ArsB) efflux (TC 2.A.45) family.

The protein resides in the cell membrane. In terms of biological role, silicon efflux transporter involved in silicon transport in shoots. In the nodes, involved with LSI2 and NIP2-2/LSI6 in silicon intervascular transfer, which is required for the preferential distribution of silicon, such as hyperaccumulation of silicon in the husk. Silicon is beneficial to plant growth and helps plants to overcome abiotic and biotic stresses by preventing lodging (falling over) and increasing resistance to pests and diseases, as well as other stresses. The chain is Silicon efflux transporter LSI3 from Oryza sativa subsp. japonica (Rice).